The sequence spans 785 residues: LPS-assembly protein LptD (785 aa).

The N-terminal stretch at 1 to 58 (MSCSCLCMSLYRGADRIGRFYTAHCPQDMALCMHRQKLNPLALALAAAFALNAPAALA) is a signal peptide.

Belongs to the LptD family. In terms of assembly, component of the lipopolysaccharide transport and assembly complex. Interacts with LptE and LptA.

It localises to the cell outer membrane. In terms of biological role, together with LptE, is involved in the assembly of lipopolysaccharide (LPS) at the surface of the outer membrane. This chain is LPS-assembly protein LptD, found in Chromobacterium violaceum (strain ATCC 12472 / DSM 30191 / JCM 1249 / CCUG 213 / NBRC 12614 / NCIMB 9131 / NCTC 9757 / MK).